The following is a 493-amino-acid chain: GPI alpha-1,6-mannosyltransferase 2 (493 aa).

Topologically, residues 1 to 13 (MWPQDPSRKEVLR) are cytoplasmic. A helical transmembrane segment spans residues 14-34 (FAVSCRILTLMLQALFNAIIP). Topologically, residues 35–77 (DHHAEAFSPPRLAPSGFVDQLVEGLLGGLSHWDAEHFLFIAEH) are lumenal. Residues 78 to 98 (GYLYEHNFAFFPGFPLALLVG) traverse the membrane as a helical segment. At 99 to 113 (TELLRPLRGLLSLRS) the chain is on the cytoplasmic side. The chain crosses the membrane as a helical span at residues 114–134 (CLLISVASLNFLFFMLAAVAL). Topologically, residues 135 to 136 (HD) are lumenal. Residues 137–157 (LGCLVLHCPHQSFYAALLFCL) traverse the membrane as a helical segment. At 158-161 (SPAN) the chain is on the cytoplasmic side. Residues 162–182 (VFLAAGYSEALFALLTFSAMG) traverse the membrane as a helical segment. At 183-192 (QLERGRVWTS) the chain is on the lumenal side. A helical membrane pass occupies residues 193–213 (VLLFAFATGVRSNGLVSVGFL). The Cytoplasmic portion of the chain corresponds to 214-234 (MHSQCQGFFSSLTMLNPLRQL). The helical transmembrane segment at 235–255 (FKLMASLFLSVFTLGLPFALF) threads the bilayer. At 256–327 (QYYAYTQFCL…KYYELKQVPN (72 aa)) the chain is on the lumenal side. The chain crosses the membrane as a helical span at residues 328 to 348 (FLLAAPVAILVAWATWTYVTT). Over 349-378 (HPWLCLTLGLQRSKNNKTLEKPDLGFLSPQ) the chain is Cytoplasmic. A helical transmembrane segment spans residues 379–399 (VFVYVVHAAVLLLFGGLCMHV). At 400–469 (QVLTRFLGSS…HWKTCSPVTR (70 aa)) the chain is on the lumenal side. The helical transmembrane segment at 470-490 (YILGYFLTYWLLGLLLHCNFL) threads the bilayer. The Cytoplasmic portion of the chain corresponds to 491–493 (PWT).

Belongs to the PIGV family. Post-translationally, not N-glycosylated.

It localises to the endoplasmic reticulum membrane. The protein operates within glycolipid biosynthesis; glycosylphosphatidylinositol-anchor biosynthesis. Its function is as follows. Alpha-1,6-mannosyltransferase that catalyzes the transfer of the second mannose, via an alpha-1,6 bond, from a dolichol-phosphate-mannose (Dol-P-Man) to the alpha-D-Man-(1-&gt;4)-alpha-D-GlcN-(1-&gt;6)-(1-radyl,2-acyl-sn-glycero-3-phospho)-2-acyl-inositol (also termed H2) intermediate to generate an alpha-D-Man-(1-&gt;6)-alpha-D-Man-(1-&gt;4)-alpha-D-GlcN-(1-&gt;6)-(1-radyl,2-acyl-sn-glycero-3-phospho)-2-acyl-inositol (also termed H3) and participates in the seventh step of the glycosylphosphatidylinositol-anchor biosynthesis. Also transfers the second mannose on a 2-PEtn-alpha-D-Man-(1-&gt;4)-alpha-D-GlcN-(1-&gt;6)-(1-radyl,2-acyl-sn-glycero-3-phospho)-2-acyl-inositol (also termed H5). This Homo sapiens (Human) protein is GPI alpha-1,6-mannosyltransferase 2.